Consider the following 470-residue polypeptide: Cysteine--tRNA ligase (470 aa).

Cys28 contacts Zn(2+). Residues 30–40 (PTVYNYIHIGN) carry the 'HIGH' region motif. Zn(2+)-binding residues include Cys211, His236, and Glu240. A 'KMSKS' region motif is present at residues 270–274 (KMSKS). Position 273 (Lys273) interacts with ATP.

It belongs to the class-I aminoacyl-tRNA synthetase family. As to quaternary structure, monomer. Requires Zn(2+) as cofactor.

The protein resides in the cytoplasm. It catalyses the reaction tRNA(Cys) + L-cysteine + ATP = L-cysteinyl-tRNA(Cys) + AMP + diphosphate. This chain is Cysteine--tRNA ligase, found in Enterococcus faecalis (strain ATCC 700802 / V583).